The chain runs to 85 residues: MASKKSGGSAKNGRDSFSKRLGVKRYDGQVVKAGNILVRQRGTKIYPGKNVGLGNDYTLFALIDGKVKFETSKGKKVVSVYPLDA.

It belongs to the bacterial ribosomal protein bL27 family.

The protein is Large ribosomal subunit protein bL27 of Persephonella marina (strain DSM 14350 / EX-H1).